A 166-amino-acid chain; its full sequence is Ribosome maturation factor RimM (166 aa).

The PRC barrel domain occupies 94–166; that stretch reads EGEYYLGKLI…IELKVLDLLK (73 aa).

It belongs to the RimM family. As to quaternary structure, binds ribosomal protein uS19.

The protein localises to the cytoplasm. In terms of biological role, an accessory protein needed during the final step in the assembly of 30S ribosomal subunit, possibly for assembly of the head region. Essential for efficient processing of 16S rRNA. May be needed both before and after RbfA during the maturation of 16S rRNA. It has affinity for free ribosomal 30S subunits but not for 70S ribosomes. The protein is Ribosome maturation factor RimM of Borreliella burgdorferi (strain ATCC 35210 / DSM 4680 / CIP 102532 / B31) (Borrelia burgdorferi).